Consider the following 304-residue polypeptide: D-alanine--D-alanine ligase (304 aa).

The 194-residue stretch at 107 to 300 (KRLWQGSGLP…FDELVARILG (194 aa)) folds into the ATP-grasp domain. 134 to 186 (VGYPVIVKPAREGSSLGMSRVEGPEELAEAYRVAAAYDDTVLAEAWVEGEEYT) lines the ATP pocket. The Mg(2+) site is built by Asp-254, Glu-267, and Asn-269.

This sequence belongs to the D-alanine--D-alanine ligase family. Mg(2+) is required as a cofactor. Requires Mn(2+) as cofactor.

It localises to the cytoplasm. It catalyses the reaction 2 D-alanine + ATP = D-alanyl-D-alanine + ADP + phosphate + H(+). It functions in the pathway cell wall biogenesis; peptidoglycan biosynthesis. Cell wall formation. The protein is D-alanine--D-alanine ligase of Halorhodospira halophila (strain DSM 244 / SL1) (Ectothiorhodospira halophila (strain DSM 244 / SL1)).